Consider the following 202-residue polypeptide: Large ribosomal subunit protein uL18 (202 aa).

The protein belongs to the universal ribosomal protein uL18 family. As to quaternary structure, part of the 50S ribosomal subunit. Contacts the 5S and 23S rRNAs.

Functionally, this is one of the proteins that bind and probably mediate the attachment of the 5S RNA into the large ribosomal subunit, where it forms part of the central protuberance. This is Large ribosomal subunit protein uL18 from Methanopyrus kandleri (strain AV19 / DSM 6324 / JCM 9639 / NBRC 100938).